An 81-amino-acid chain; its full sequence is U6-theraphotoxin-Hs1a (81 aa).

Residues 1-21 (MKASMFLALAGLVLLFVVCYA) form the signal peptide. Residues 22 to 48 (SESEEKEFPRELLSTIFAVDDFKGEER) constitute a propeptide that is removed on maturation. 2 disulfides stabilise this stretch: Cys-50–Cys-65 and Cys-57–Cys-70.

The protein belongs to the neurotoxin 10 (Hwtx-1) family. 51 (Hntx-8) subfamily. In terms of tissue distribution, expressed by the venom gland.

The protein localises to the secreted. Binds to the nicotinic acetylcholine receptor. Blocks neuromuscular transmission. The chain is U6-theraphotoxin-Hs1a from Cyriopagopus schmidti (Chinese bird spider).